Reading from the N-terminus, the 376-residue chain is Anhydro-N-acetylmuramic acid kinase (376 aa).

ATP is bound at residue 16 to 23 (GTSMDGVD).

This sequence belongs to the anhydro-N-acetylmuramic acid kinase family.

It carries out the reaction 1,6-anhydro-N-acetyl-beta-muramate + ATP + H2O = N-acetyl-D-muramate 6-phosphate + ADP + H(+). The protein operates within amino-sugar metabolism; 1,6-anhydro-N-acetylmuramate degradation. Its pathway is cell wall biogenesis; peptidoglycan recycling. Its function is as follows. Catalyzes the specific phosphorylation of 1,6-anhydro-N-acetylmuramic acid (anhMurNAc) with the simultaneous cleavage of the 1,6-anhydro ring, generating MurNAc-6-P. Is required for the utilization of anhMurNAc either imported from the medium or derived from its own cell wall murein, and thus plays a role in cell wall recycling. This Paraburkholderia xenovorans (strain LB400) protein is Anhydro-N-acetylmuramic acid kinase.